We begin with the raw amino-acid sequence, 279 residues long: Urease accessory protein UreD (279 aa).

Belongs to the UreD family. UreD, UreF and UreG form a complex that acts as a GTP-hydrolysis-dependent molecular chaperone, activating the urease apoprotein by helping to assemble the nickel containing metallocenter of UreC. The UreE protein probably delivers the nickel.

It localises to the cytoplasm. Its function is as follows. Required for maturation of urease via the functional incorporation of the urease nickel metallocenter. The polypeptide is Urease accessory protein UreD (Brucella suis (strain ATCC 23445 / NCTC 10510)).